The chain runs to 769 residues: Post-GPI attachment to proteins factor 6 (769 aa).

The signal sequence occupies residues 1-33 (MGRVGAGGTAREAATGSLLLLLLLLARPPPAAA). Over 34–543 (SNSKESEAGL…STAQTVAQQR (510 aa)) the chain is Extracellular. N-linked (GlcNAc...) asparagine glycosylation is found at asparagine 138 and asparagine 411. The EGF-like domain occupies 495–531 (PCLNDCGPYGQCLLLRRYGYVYAGCSCKAGWRGWSCT). 3 disulfide bridges follow: cysteine 496-cysteine 506, cysteine 500-cysteine 519, and cysteine 521-cysteine 530. The helical transmembrane segment at 544–564 (AAALLLTLSNLMFLAPIAISL) threads the bilayer. The Cytoplasmic segment spans residues 565 to 567 (HRS). A helical membrane pass occupies residues 568–588 (FLVEASVYFYTMFFSTFYHAC). The Extracellular segment spans residues 589 to 603 (DQPGEAVLCILSYDT). Residues 604–624 (LQYCDFLGSGASTWVTILCMA) form a helical membrane-spanning segment. At 625–627 (RLK) the chain is on the cytoplasmic side. Residues 628–648 (TILKQVLLVLGTLVIAMSLQM) traverse the membrane as a helical segment. The Extracellular segment spans residues 649–651 (DRR). A helical membrane pass occupies residues 652-672 (GIWNLMGPCVFAFVIMASMWI). At 673–688 (YRCGHRGQCYPTSWQR) the chain is on the cytoplasmic side. A helical transmembrane segment spans residues 689-709 (WVFYLLPGISMASVGIAMYTS). The Extracellular portion of the chain corresponds to 710–715 (MMTSDN). Residues 716-736 (YYYTHSIWHILLAGSAAFLLP) traverse the membrane as a helical segment. Over 737-769 (PREEKAGSWACLQKFPCHYQICRNDRDELYTVT) the chain is Cytoplasmic.

Belongs to the TMEM8 family. Glycosylated.

Its subcellular location is the cell membrane. It localises to the lysosome membrane. It carries out the reaction a 1,2-diacyl-sn-glycero-3-phosphocholine + H2O = a 1-acyl-sn-glycero-3-phosphocholine + a fatty acid + H(+). Functionally, involved in the lipid remodeling steps of GPI-anchor maturation. Lipid remodeling steps consist in the generation of 2 saturated fatty chains at the sn-2 position of GPI-anchor proteins (GPI-AP). Has phospholipase A2 activity that removes an acyl-chain at the sn-2 position of GPI-anchors during the remodeling of GPI. Required for the shedding of the GPI-AP CRIPTO, but not CFC1, at the cell surface. Shedding of CRIPTO modulates Nodal signaling by allowing soluble CRIPTO to act as a Nodal coreceptor on other cells. Also indirectly involved in the translocation of RAC1 from the cytosol to the plasma membrane by maintaining the steady state amount of CAV1-enriched plasma membrane subdomains, stabilizing RAC1 at the plasma membrane. The polypeptide is Post-GPI attachment to proteins factor 6 (Mus musculus (Mouse)).